A 255-amino-acid polypeptide reads, in one-letter code: H-2 class II histocompatibility antigen, E-U alpha chain (255 aa).

An N-terminal signal peptide occupies residues 1-25 (MATIGALLLRFFFIAVLMSSQKSWA). The segment at 26-109 (IKEEHTIIQA…KRSNNTPDAN (84 aa)) is alpha-1. Topologically, residues 26-217 (IKEEHTIIQA…KTLLPETKEN (192 aa)) are extracellular. Positions 110-203 (VAPEVTVLSR…GLEEPLRKHW (94 aa)) are alpha-2. One can recognise an Ig-like C1-type domain in the interval 112–204 (PEVTVLSRSP…LEEPLRKHWE (93 aa)). Cysteines 132 and 188 form a disulfide. An N-linked (GlcNAc...) asparagine glycan is attached at N143. Residues 204-216 (EFEEKTLLPETKE) form a connecting peptide region. A helical transmembrane segment spans residues 218 to 238 (VVCALGLFVGLVGIVVGIILI). Over 239–255 (MKGIKKRNVVERRQGAL) the chain is Cytoplasmic.

This sequence belongs to the MHC class II family.

It is found in the membrane. The chain is H-2 class II histocompatibility antigen, E-U alpha chain (H2-Ea) from Mus musculus (Mouse).